Reading from the N-terminus, the 154-residue chain is Protein X (154 aa).

Positions Pro68–Phe117 are mitochondrial targeting sequence.

It belongs to the orthohepadnavirus protein X family. As to quaternary structure, may form homodimer. May interact with host CEBPA, CFLAR, CREB1, DDB1, E4F1, HBXIP, HSPD1/HSP60, NFKBIA, POLR2E and SMAD4. Interacts with host SMC5-SMC6 complex and induces its degradation. Interacts with host TRPC4AP; leading to prevent ubiquitination of TRPC4AP. Interacts with host PLSCR1; this interaction promotes ubiquitination and degradation of HBx and impairs HBx-mediated cell proliferation. Post-translationally, a fraction may be phosphorylated in insect cells and HepG2 cells, a human hepatoblastoma cell line. Phosphorylated in vitro by host protein kinase C or mitogen-activated protein kinase. N-acetylated in insect cells.

It is found in the host cytoplasm. It localises to the host nucleus. The protein resides in the host mitochondrion. Its function is as follows. Multifunctional protein that plays a role in silencing host antiviral defenses and promoting viral transcription. Does not seem to be essential for HBV infection. May be directly involved in development of cirrhosis and liver cancer (hepatocellular carcinoma). Most of cytosolic activities involve modulation of cytosolic calcium. The effect on apoptosis is controversial depending on the cell types in which the studies have been conducted. May induce apoptosis by localizing in mitochondria and causing loss of mitochondrial membrane potential. May also modulate apoptosis by binding host CFLAR, a key regulator of the death-inducing signaling complex (DISC). Promotes viral transcription by using the host E3 ubiquitin ligase DDB1 to target the SMC5-SMC6 complex to proteasomal degradation. This host complex would otherwise bind to viral episomal DNA, and prevents its transcription. Moderately stimulates transcription of many different viral and cellular transcription elements. Promoters and enhancers stimulated by HBx contain DNA binding sites for NF-kappa-B, AP-1, AP-2, c-EBP, ATF/CREB, or the calcium-activated factor NF-AT. The polypeptide is Protein X (Gorilla gorilla (western gorilla)).